The chain runs to 887 residues: Beta-galactosidase 9 (887 aa).

Positions M1–G30 are cleaved as a signal peptide. N37 carries N-linked (GlcNAc...) asparagine glycosylation. The Proton donor role is filled by E194. E263 acts as the Nucleophile in catalysis. N-linked (GlcNAc...) asparagine glycosylation is found at N463, N485, N496, N527, and N785. An SUEL-type lectin domain is found at N791–S877. N-linked (GlcNAc...) asparagine glycosylation is present at N881.

Belongs to the glycosyl hydrolase 35 family. As to expression, ubiquitous, with higher expression levels in siliques.

The protein localises to the secreted. It localises to the extracellular space. It is found in the apoplast. It catalyses the reaction Hydrolysis of terminal non-reducing beta-D-galactose residues in beta-D-galactosides.. This Arabidopsis thaliana (Mouse-ear cress) protein is Beta-galactosidase 9 (BGAL9).